Here is a 649-residue protein sequence, read N- to C-terminus: Vitamin K-dependent protein S (649 aa).

Positions 1 to 14 are excised as a propeptide; it reads SKQQASQVLVRKRR. In terms of domain architecture, Gla spans 15–60; it reads ANSMLEETKQGNLERECIEELCNKEEAREVFENDPETDYFYPKYLV. Residues glutamate 20, glutamate 21, glutamate 28, glutamate 30, glutamate 33, glutamate 34, glutamate 39, glutamate 40, glutamate 43, glutamate 46, and glutamate 50 each carry the 4-carboxyglutamate modification. Cysteine 31 and cysteine 36 are disulfide-bonded. A thrombin-sensitive region spans residues 61 to 89; sequence CLRSFQSGLFTAARQSTDAYPDLRSCVNA. Positions 90–128 constitute an EGF-like 1 domain; the sequence is IPDQCSPLPCNEDGYMSCKDGKASFTCTCKPGWQGERCE. Disulfide bonds link cysteine 94/cysteine 107, cysteine 99/cysteine 116, cysteine 118/cysteine 127, cysteine 134/cysteine 148, cysteine 144/cysteine 157, cysteine 159/cysteine 172, cysteine 178/cysteine 190, cysteine 185/cysteine 199, cysteine 201/cysteine 214, cysteine 220/cysteine 229, cysteine 225/cysteine 238, cysteine 240/cysteine 255, and cysteine 422/cysteine 448. Aspartate 109 carries the post-translational modification (3R)-3-hydroxyaspartate. One can recognise an EGF-like 2; calcium-binding domain in the interval 130–173; the sequence is DINECKDPSNINGGCSQICDNTPGSYHCSCKSGFVMLSNKKDCK. Positions 174 to 215 constitute an EGF-like 3; calcium-binding domain; that stretch reads DVDECSLKPNMCGTAVCKNIPGDFECECPEGYRYNLKSKSCE. The region spanning 216 to 256 is the EGF-like 4; calcium-binding domain; that stretch reads DVDECSENMCAQLCVNYPGGYTCYCDGKKGFKLAQDQKSCE. Laminin G-like domains are found at residues 272-448 and 457-639; these read LLYL…NKHC and YYPG…AHSC. 3 N-linked (GlcNAc...) asparagine glycosylation sites follow: asparagine 472, asparagine 482, and asparagine 503. An intrachain disulfide couples cysteine 612 to cysteine 639.

Post-translationally, the iron and 2-oxoglutarate dependent 3-hydroxylation of aspartate and asparagine is (R) stereospecific within EGF domains. In terms of tissue distribution, plasma.

Its subcellular location is the secreted. Anticoagulant plasma protein; it is a cofactor to activated protein C in the degradation of coagulation factors Va and VIIIa. It helps to prevent coagulation and stimulating fibrinolysis. The chain is Vitamin K-dependent protein S (PROS1) from Macaca mulatta (Rhesus macaque).